Consider the following 1019-residue polypeptide: Probable inorganic carbon transporter subunit DabA 1 (1019 aa).

The Zn(2+) site is built by cysteine 491 and aspartate 493. The tract at residues 624 to 643 (VPTRLHSPRDEGSAAGGEGQ) is disordered. The Zn(2+) site is built by histidine 676 and cysteine 691.

The protein belongs to the inorganic carbon transporter (TC 9.A.2) DabA family. Forms a complex with DabB. The cofactor is Zn(2+).

The protein localises to the cell inner membrane. Its function is as follows. Part of an energy-coupled inorganic carbon pump. The chain is Probable inorganic carbon transporter subunit DabA 1 from Sorangium cellulosum (strain So ce56) (Polyangium cellulosum (strain So ce56)).